The following is a 488-amino-acid chain: Inositol 1,3,4-trisphosphate 5/6-kinase 4 (488 aa).

Lysine 208 and lysine 224 together coordinate 1D-myo-inositol 1,3,4-trisphosphate. The ATP-grasp domain maps to 246 to 488 (NACAIVDPIR…RFDQHVQEKH (243 aa)). ATP is bound by residues arginine 263 and lysine 315. Histidine 326 and lysine 360 together coordinate 1D-myo-inositol 1,3,4-trisphosphate. Residues 349–360 (QEYVDHSSRIFK), serine 375, and serine 398 contribute to the ATP site. Mg(2+) contacts are provided by aspartate 439, aspartate 453, and asparagine 455. Residues asparagine 455 and serine 459 each contribute to the 1D-myo-inositol 1,3,4-trisphosphate site.

It belongs to the ITPK1 family. Monomer. It depends on Mg(2+) as a cofactor. In terms of tissue distribution, expressed in roots, leaf vasculature, cauline leaves, flower buds and siliques.

The catalysed reaction is 1D-myo-inositol 1,3,4-trisphosphate + ATP = 1D-myo-inositol 1,3,4,5-tetrakisphosphate + ADP + H(+). It catalyses the reaction 1D-myo-inositol 1,3,4-trisphosphate + ATP = 1D-myo-inositol 1,3,4,6-tetrakisphosphate + ADP + H(+). In terms of biological role, kinase that can phosphorylate the inositol polyphosphate Ins(1,3,4)P3 to form InsP4. Also phosphorylates a racemic mixture of Ins(1,4,6)P3 and Ins(3,4,6)P3 to form InsP4. Does not display inositol 3,4,5,6-tetrakisphosphate 1-kinase activity, but possesses inositol 1,4,5,6-tetrakisphosphate and inositol 1,3,4,5-tetrakisphosphate isomerase activity. Ins(1,3,4,6)P4 is an essential molecule in the hexakisphosphate (InsP6) pathway. The protein is Inositol 1,3,4-trisphosphate 5/6-kinase 4 (ITPK4) of Arabidopsis thaliana (Mouse-ear cress).